The sequence spans 1347 residues: Protocadherin-11 X-linked (1347 aa).

The N-terminal stretch at 1 to 23 (MDLLSGTYIFAVLLACVVFHSGA) is a signal peptide. The Extracellular portion of the chain corresponds to 24–812 (QEKNYTIREE…VSSPTSDYVK (789 aa)). Cadherin domains are found at residues 26–139 (KNYT…APLF), 140–249 (PATV…HPVF), 250–355 (KETE…VPSI), 362–466 (NPVN…APVF), 467–570 (TQSF…SPVF), 571–673 (THNE…KPVF), and 677–795 (PSNY…APVT). N-linked (GlcNAc...) asparagine glycans are attached at residues Asn27, Asn48, and Asn54. Residue Asn344 is glycosylated (N-linked (GlcNAc...) asparagine). Residue Asn553 is glycosylated (N-linked (GlcNAc...) asparagine). Asn773 carries an N-linked (GlcNAc...) asparagine glycan. The helical transmembrane segment at 813–833 (ILVAAVAGTITVVVVIFITAV) threads the bilayer. The Cytoplasmic portion of the chain corresponds to 834-1347 (VRCRQAPHLK…DSPVMEEHPL (514 aa)). Disordered stretches follow at residues 1057-1091 (LPEGSQESSSDGGLGDHDAGSLTSTSHGLPLGYPQ), 1097-1116 (RATPSNRTEGDGNSDPESTF), and 1325-1347 (TFTPRQQARPSRGDSPVMEEHPL).

The protein localises to the cell membrane. Functionally, potential calcium-dependent cell-adhesion protein. The chain is Protocadherin-11 X-linked (PCDH11X) from Pan paniscus (Pygmy chimpanzee).